We begin with the raw amino-acid sequence, 143 residues long: Phospholipase A2 isozymes PA3A/PA3B/PA5 (143 aa).

Residues Trp-10, Gly-12, and Gly-14 each contribute to the Ca(2+) site. Cystine bridges form between Cys-11–Cys-33, Cys-32–Cys-72, and Cys-39–Cys-65. His-36 is a catalytic residue. Residue Asp-37 coordinates Ca(2+).

This sequence belongs to the phospholipase A2 family. Group III subfamily. Requires Ca(2+) as cofactor. As to expression, expressed by the venom gland.

The protein localises to the secreted. It catalyses the reaction a 1,2-diacyl-sn-glycero-3-phosphocholine + H2O = a 1-acyl-sn-glycero-3-phosphocholine + a fatty acid + H(+). PLA2 catalyzes the calcium-dependent hydrolysis of the 2-acyl groups in 3-sn-phosphoglycerides. In Heloderma suspectum (Gila monster), this protein is Phospholipase A2 isozymes PA3A/PA3B/PA5.